Reading from the N-terminus, the 539-residue chain is Protein peanut (539 aa).

Phosphoserine occurs at positions 6 and 13. A disordered region spans residues 29–90 (LRDKQQAASA…GASNGDSNKL (62 aa)). The span at 35–54 (AASASASSATNGSSGSESLV) shows a compositional bias: low complexity. Residues 139–411 (RGFEFTLMVV…ENYRCRKLSE (273 aa)) form the Septin-type G domain. Residues 149 to 156 (GASGLGKS) form a G1 motif region. Residues 149–156 (GASGLGKS), Thr183, Gly209, 288–296 (KADTMTPDE), Gly345, and Arg360 contribute to the GTP site. A G3 motif region spans residues 206-209 (DTPG). The segment at 287 to 290 (AKAD) is G4 motif. Residues 420–516 (RLSNKNPLTQ…HVTLEELKRR (97 aa)) adopt a coiled-coil conformation. Residues 513–539 (LKRRSLGANSSTDNVDGKKEKKKKGLF) are disordered. Residue Ser517 is modified to Phosphoserine.

The protein belongs to the TRAFAC class TrmE-Era-EngA-EngB-Septin-like GTPase superfamily. Septin GTPase family. As to quaternary structure, likely part of a multicomponent septin complex that includes Septin1. Interacts with Septin1. Interacts with hil. Interacts with park. Post-translationally, ubiquitinated by park, leading to its degradation by the proteasome. As to expression, accumulates at the leading edge of the cleavage furrow in dividing cells and cellularizing embryos (at protein level).

The protein resides in the apical cell membrane. It localises to the cleavage furrow. It is found in the cytoplasm. Its subcellular location is the cell cortex. In terms of biological role, involved in cytokinesis and possibly cellularization. Also acts as an enhancer of the sina gene, thus having a role in photoreceptor development. May be involved in p53-dependent apoptosis. In Drosophila melanogaster (Fruit fly), this protein is Protein peanut (pnut).